The following is a 244-amino-acid chain: 1-(5-phosphoribosyl)-5-[(5-phosphoribosylamino)methylideneamino] imidazole-4-carboxamide isomerase (244 aa).

The active-site Proton acceptor is Asp-9. Catalysis depends on Asp-131, which acts as the Proton donor.

The protein belongs to the HisA/HisF family.

The protein resides in the cytoplasm. The enzyme catalyses 1-(5-phospho-beta-D-ribosyl)-5-[(5-phospho-beta-D-ribosylamino)methylideneamino]imidazole-4-carboxamide = 5-[(5-phospho-1-deoxy-D-ribulos-1-ylimino)methylamino]-1-(5-phospho-beta-D-ribosyl)imidazole-4-carboxamide. It participates in amino-acid biosynthesis; L-histidine biosynthesis; L-histidine from 5-phospho-alpha-D-ribose 1-diphosphate: step 4/9. This chain is 1-(5-phosphoribosyl)-5-[(5-phosphoribosylamino)methylideneamino] imidazole-4-carboxamide isomerase, found in Campylobacter jejuni subsp. doylei (strain ATCC BAA-1458 / RM4099 / 269.97).